A 302-amino-acid polypeptide reads, in one-letter code: Protein TILLER ANGLE CONTROL 1 (302 aa).

The IGT motif signature appears at 57–63 (GILTIGT). 2 disordered regions span residues 82 to 115 (ESEE…VEDE) and 159 to 180 (EGSS…KNKK). Acidic residues predominate over residues 99 to 115 (DDDDDDDEHYDHSVEDE). Positions 162–175 (SEISTKPDQSANDQ) are enriched in polar residues.

It belongs to the TAC family. Highly expressed in flower buds. Expressed in branch attachment sites, vegetative buds and young fruits.

Its function is as follows. Involved in the regulation of axillary shoot growth angle. Promotes horizontal shoot growth. This chain is Protein TILLER ANGLE CONTROL 1, found in Prunus persica (Peach).